The chain runs to 191 residues: Peptidyl-tRNA hydrolase (191 aa).

Tyr-17 provides a ligand contact to tRNA. Catalysis depends on His-22, which acts as the Proton acceptor. TRNA is bound by residues Tyr-68, Asn-70, and Asn-116.

The protein belongs to the PTH family. As to quaternary structure, monomer.

The protein localises to the cytoplasm. The catalysed reaction is an N-acyl-L-alpha-aminoacyl-tRNA + H2O = an N-acyl-L-amino acid + a tRNA + H(+). Functionally, hydrolyzes ribosome-free peptidyl-tRNAs (with 1 or more amino acids incorporated), which drop off the ribosome during protein synthesis, or as a result of ribosome stalling. Catalyzes the release of premature peptidyl moieties from peptidyl-tRNA molecules trapped in stalled 50S ribosomal subunits, and thus maintains levels of free tRNAs and 50S ribosomes. The chain is Peptidyl-tRNA hydrolase from Mycobacterium avium (strain 104).